We begin with the raw amino-acid sequence, 259 residues long: MNNLSLANEKTKIQVRGLEFFYNNQKSLKSIDMTIPEKRITAIIGPSGCGKSTLLRVFNRIYAMYPKQEARGEVLLNGENILAPGYSMNRLRSHVGMVFQKPVPFPMSIYDNISYAIKHHEKLSRREMEDRVEQALRGAALWDEVKDKLKQSATGLSGGQQQRLCIARTIALRPQVLLLDEPTSALDPISTGRIEQLITELKEQFTVIIVTHNMQQAARCSDYTAFMFMGELIEHGDTDTIFTKPSKTQTEDYITGRFG.

Residues 13–254 enclose the ABC transporter domain; that stretch reads IQVRGLEFFY…PSKTQTEDYI (242 aa). 45–52 is an ATP binding site; sequence GPSGCGKS.

The protein belongs to the ABC transporter superfamily. Phosphate importer (TC 3.A.1.7) family. The complex is composed of two ATP-binding proteins (PstB), two transmembrane proteins (PstC and PstA) and a solute-binding protein (PstS).

The protein localises to the cell inner membrane. It carries out the reaction phosphate(out) + ATP + H2O = ADP + 2 phosphate(in) + H(+). Part of the ABC transporter complex PstSACB involved in phosphate import. Responsible for energy coupling to the transport system. The sequence is that of Phosphate import ATP-binding protein PstB 1 from Pseudomonas syringae pv. tomato (strain ATCC BAA-871 / DC3000).